The primary structure comprises 117 residues: Protein MGF 110-13L (117 aa).

An N-terminal signal peptide occupies residues 1-16 (MKLFVLLSILVWLAQP).

Belongs to the asfivirus MGF 110 family.

The chain is Protein MGF 110-13L from Ornithodoros (relapsing fever ticks).